The chain runs to 349 residues: Phosphoribosylformylglycinamidine cyclo-ligase (349 aa).

The protein belongs to the AIR synthase family.

Its subcellular location is the cytoplasm. It carries out the reaction 2-formamido-N(1)-(5-O-phospho-beta-D-ribosyl)acetamidine + ATP = 5-amino-1-(5-phospho-beta-D-ribosyl)imidazole + ADP + phosphate + H(+). The protein operates within purine metabolism; IMP biosynthesis via de novo pathway; 5-amino-1-(5-phospho-D-ribosyl)imidazole from N(2)-formyl-N(1)-(5-phospho-D-ribosyl)glycinamide: step 2/2. The chain is Phosphoribosylformylglycinamidine cyclo-ligase from Listeria monocytogenes serotype 4a (strain HCC23).